A 277-amino-acid chain; its full sequence is Pantothenate synthetase (277 aa).

Position 28-35 (28-35) interacts with ATP; the sequence is MGALHSGH. Catalysis depends on His-35, which acts as the Proton donor. Gln-59 provides a ligand contact to (R)-pantoate. Position 59 (Gln-59) interacts with beta-alanine. Residues 145-148, Val-174, and 182-185 contribute to the ATP site; these read GEKD and LSSR.

It belongs to the pantothenate synthetase family. In terms of assembly, homodimer.

The protein localises to the cytoplasm. It catalyses the reaction (R)-pantoate + beta-alanine + ATP = (R)-pantothenate + AMP + diphosphate + H(+). It functions in the pathway cofactor biosynthesis; (R)-pantothenate biosynthesis; (R)-pantothenate from (R)-pantoate and beta-alanine: step 1/1. Its function is as follows. Catalyzes the condensation of pantoate with beta-alanine in an ATP-dependent reaction via a pantoyl-adenylate intermediate. The sequence is that of Pantothenate synthetase from Anaplasma marginale (strain St. Maries).